A 230-amino-acid polypeptide reads, in one-letter code: Large ribosomal subunit protein uL1 (230 aa).

The protein belongs to the universal ribosomal protein uL1 family. As to quaternary structure, part of the 50S ribosomal subunit.

In terms of biological role, binds directly to 23S rRNA. The L1 stalk is quite mobile in the ribosome, and is involved in E site tRNA release. Its function is as follows. Protein L1 is also a translational repressor protein, it controls the translation of the L11 operon by binding to its mRNA. This Desulfitobacterium hafniense (strain DSM 10664 / DCB-2) protein is Large ribosomal subunit protein uL1.